Consider the following 95-residue polypeptide: Aspartyl/glutamyl-tRNA(Asn/Gln) amidotransferase subunit C (95 aa).

This sequence belongs to the GatC family. In terms of assembly, heterotrimer of A, B and C subunits.

The enzyme catalyses L-glutamyl-tRNA(Gln) + L-glutamine + ATP + H2O = L-glutaminyl-tRNA(Gln) + L-glutamate + ADP + phosphate + H(+). It catalyses the reaction L-aspartyl-tRNA(Asn) + L-glutamine + ATP + H2O = L-asparaginyl-tRNA(Asn) + L-glutamate + ADP + phosphate + 2 H(+). Allows the formation of correctly charged Asn-tRNA(Asn) or Gln-tRNA(Gln) through the transamidation of misacylated Asp-tRNA(Asn) or Glu-tRNA(Gln) in organisms which lack either or both of asparaginyl-tRNA or glutaminyl-tRNA synthetases. The reaction takes place in the presence of glutamine and ATP through an activated phospho-Asp-tRNA(Asn) or phospho-Glu-tRNA(Gln). This Acetivibrio thermocellus (strain ATCC 27405 / DSM 1237 / JCM 9322 / NBRC 103400 / NCIMB 10682 / NRRL B-4536 / VPI 7372) (Clostridium thermocellum) protein is Aspartyl/glutamyl-tRNA(Asn/Gln) amidotransferase subunit C.